The following is a 196-amino-acid chain: MSFIRSALAAAAFVALSIGAVQTASAADPENTVILKLKDGDVALEIRPDLAPKHVAQIKKLVREGAYNGVAFHRVIPGFMAQTGDVKFGNMDKGFDAARVGTGGSNYPDLPAEFSKEPFVRGTVGMARSQNPNSANSQFFIMFDDGPFLNGQYTVVGKVVSGMDAVDKIKKGSEAENGAVKNPDKIIKATIEADTK.

A signal peptide spans 1-26 (MSFIRSALAAAAFVALSIGAVQTASA). One can recognise a PPIase cyclophilin-type domain in the interval 29 to 194 (PENTVILKLK…KIIKATIEAD (166 aa)).

This sequence belongs to the cyclophilin-type PPIase family.

Its subcellular location is the periplasm. It catalyses the reaction [protein]-peptidylproline (omega=180) = [protein]-peptidylproline (omega=0). In terms of biological role, PPIases accelerate the folding of proteins. It catalyzes the cis-trans isomerization of proline imidic peptide bonds in oligopeptides. This Brucella abortus (strain 2308) protein is Probable peptidyl-prolyl cis-trans isomerase (ppi).